Consider the following 117-residue polypeptide: Ig heavy chain V region MOPC 104E (117 aa).

The Ig-like domain maps to 1–116 (EVQLQQSGPE…WGAGTTVTVS (116 aa)). A disulfide bridge connects residues Cys22 and Cys96. N-linked (GlcNAc...) (high mannose) asparagine; atypical glycosylation is present at Asn55.

In Mus musculus (Mouse), this protein is Ig heavy chain V region MOPC 104E.